We begin with the raw amino-acid sequence, 218 residues long: Octanoyltransferase (218 aa).

Positions 27-210 (AGAEETLYLL…QFRAIFADST (184 aa)) constitute a BPL/LPL catalytic domain. Substrate-binding positions include 72-79 (RGGNITCH), 139-141 (SIG), and 152-154 (GFA). The Acyl-thioester intermediate role is filled by Cys170.

The protein belongs to the LipB family.

The protein localises to the cytoplasm. The catalysed reaction is octanoyl-[ACP] + L-lysyl-[protein] = N(6)-octanoyl-L-lysyl-[protein] + holo-[ACP] + H(+). It functions in the pathway protein modification; protein lipoylation via endogenous pathway; protein N(6)-(lipoyl)lysine from octanoyl-[acyl-carrier-protein]: step 1/2. In terms of biological role, catalyzes the transfer of endogenously produced octanoic acid from octanoyl-acyl-carrier-protein onto the lipoyl domains of lipoate-dependent enzymes. Lipoyl-ACP can also act as a substrate although octanoyl-ACP is likely to be the physiological substrate. The protein is Octanoyltransferase of Nitratidesulfovibrio vulgaris (strain DSM 19637 / Miyazaki F) (Desulfovibrio vulgaris).